A 754-amino-acid chain; its full sequence is MTPATAEVKVGGRKRKNDEPVFIKTKQSRSARREEEKENLLNKSLPSTPTSSEAGSSRESSNPVTSSSRRKNPPTKLENIQKTLPTCSDGLEIRNYVKKYGLPEDNKFLVRNVFDKQLLFGKKYVCRRRVIKSIDEFFPRLKTDAHRENGLYNFCTLQFMKISSWGSSMDEKIYVTSAAIVQSYVIIVDDNDSVTCIENGISVIPMANRTLPSISYNSSNVKNITLTGPELKKAKNVYLAVIVKRKTPKLGENRVGTRGKSTRASFETAASSENFQQLVRFGCTLMYDKDAEINCLNDGVQRIILLDREEKPAYLKIFGKADEPELENAWMNNVKHLEFISDTNYNKEDSHLARLIFSSNTHNYFDRPDISKFSPWQPRSRRTTLKSGISVEPGTSCDEDCGSQYEDTITLKQLLLGTKKLCGRRKRHLTRLTSRWPCFSVDPTKINSYFNETGVTLLENSCSYRPGTQRSIPIKPTRVIRVREETPVSVPIEVITIEDDSDDSPCFSARNRAPGGTRKYGLDFIQSSGHMPYIRYVYMNRANDLVPQLNGEENGKIEGLMEAYPMNNAHMYSDIEFLRKEKLNLPKNAQKYGEMTILDYPLTKTETDEYNKKMSVMNVKDFAVKPRKPIPTVGNTTLSLDLEGCPISTFSEIFFPSGKTELFNILCRHFYSEAGQRPGCFSAQWKSRVLTGFINKYHQYIFDMKLNSLFEKQINLIAMVSPDWKLEDFELPMVRYKQLKKEWKNRQRDIPSSN.

The disordered stretch occupies residues 1-83 (MTPATAEVKV…PTKLENIQKT (83 aa)). The segment covering 31–40 (ARREEEKENL) has biased composition (basic and acidic residues). Low complexity predominate over residues 51–61 (SSEAGSSRESS).

In terms of assembly, forms a heterotrimeric complex with the Polycomb proteins mes-2 and mes-3. Does not interact with mes-4. Interacts with nyfa-1. In terms of tissue distribution, in adults, it is predominantly expressed in the germline, and weakly expressed in intestinal cells.

It localises to the nucleus. Component of a Polycomb group (PcG) complex. PcG proteins act by forming multiprotein complexes, which are required to maintain the transcriptionally repressive state of homeotic genes throughout development. In association with the nfya-1-NF-Y complex, may play a role in repressing the expression of the homeobox protein egl-5 in tissues such as the head. PcG proteins are not required to initiate repression, but to maintain it during later stages of development. The mes-2/mes-3/mes-6 complex may participate in the global inactivation of the X chromosomes in germline cells. The complex may act via methylation of histone H3 'Lys-27', rendering chromatin heritably changed in its expressibility. This complex is required to exclude mes-4 from the inactivated X-chromosomes in germline cells. In Caenorhabditis elegans, this protein is Polycomb protein mes-3.